Here is a 146-residue protein sequence, read N- to C-terminus: Snaclec anticoagulant protein subunit B (146 aa).

The signal sequence occupies residues 1 to 23 (MGRFIFVSFGLLVLFLSLSGTAA). The C-type lectin domain maps to 24 to 146 (DCPSDWSSYE…IANFVCEFQA (123 aa)). 3 disulfide bridges follow: cysteine 25–cysteine 36, cysteine 53–cysteine 142, and cysteine 119–cysteine 134. Positions 64, 66, and 70 each coordinate Ca(2+). Glutamate 143 serves as a coordination point for Ca(2+).

This sequence belongs to the snaclec family. Heterodimer with subunit A of agkisacutacin or AaACP; disulfide-linked. Expressed by the venom gland.

The protein resides in the secreted. Functionally, anticoagulant protein which binds to the gamma-carboxyglutamic acid-domain regions of factors IX and factor X in the presence of calcium with a 1 to 1 stoichiometry. Also inhibits platelet aggregation by binding to platelet glycoprotein Ibalpha (GP1BA) and functioning as a blocker of vWF. Is devoid of hemorrhagic and lethal activities. Possesses antithrombotic and thrombolytic activities. Also hydrolyzes the Aalpha-chain of fibrinogen. Does not affect the Bbeta-chain and the gamma chain. The sequence is that of Snaclec anticoagulant protein subunit B from Deinagkistrodon acutus (Hundred-pace snake).